Here is a 304-residue protein sequence, read N- to C-terminus: Probable aspartoacylase (304 aa).

Positions 13 and 16 each coordinate Zn(2+). Residues arginine 55 and 62 to 63 (NR) contribute to the substrate site. Histidine 104 contributes to the Zn(2+) binding site. Residues glutamate 162 and tyrosine 272 each contribute to the substrate site.

This sequence belongs to the AspA/AstE family. Aspartoacylase subfamily. Requires Zn(2+) as cofactor.

The catalysed reaction is an N-acyl-L-aspartate + H2O = a carboxylate + L-aspartate. The protein is Probable aspartoacylase of Synechococcus sp. (strain CC9605).